A 347-amino-acid chain; its full sequence is Protein RecA (347 aa).

67–74 (GPESSGKT) is a binding site for ATP. Residues 327 to 347 (ALGLSSPTPKENGKEKGKAKP) are disordered. The segment covering 337 to 347 (ENGKEKGKAKP) has biased composition (basic and acidic residues).

It belongs to the RecA family.

It is found in the cytoplasm. In terms of biological role, can catalyze the hydrolysis of ATP in the presence of single-stranded DNA, the ATP-dependent uptake of single-stranded DNA by duplex DNA, and the ATP-dependent hybridization of homologous single-stranded DNAs. It interacts with LexA causing its activation and leading to its autocatalytic cleavage. This chain is Protein RecA, found in Desulforapulum autotrophicum (strain ATCC 43914 / DSM 3382 / VKM B-1955 / HRM2) (Desulfobacterium autotrophicum).